Here is a 49-residue protein sequence, read N- to C-terminus: Large ribosomal subunit protein bL33D (49 aa).

Belongs to the bacterial ribosomal protein bL33 family.

This chain is Large ribosomal subunit protein bL33D (rpmG4), found in Enterococcus faecalis (strain ATCC 700802 / V583).